The chain runs to 101 residues: Small ribosomal subunit protein uS14 (101 aa).

The tract at residues 51–72 is disordered; that stretch reads LPRDSSPSRQRNPCRQTGRPHG. Positions 52 to 65 are enriched in polar residues; the sequence is PRDSSPSRQRNPCR.

Belongs to the universal ribosomal protein uS14 family. In terms of assembly, part of the 30S ribosomal subunit. Contacts proteins S3 and S10.

Binds 16S rRNA, required for the assembly of 30S particles and may also be responsible for determining the conformation of the 16S rRNA at the A site. This is Small ribosomal subunit protein uS14 from Buchnera aphidicola subsp. Acyrthosiphon kondoi (Acyrthosiphon kondoi symbiotic bacterium).